Here is a 371-residue protein sequence, read N- to C-terminus: Carbamoyl phosphate synthase small chain (371 aa).

The CPSase stretch occupies residues 1-182; the sequence is MGVHKKGYLV…KNPIVHTPKN (182 aa). Residues S49, G235, and G237 each coordinate L-glutamine. Residues 186-371 enclose the Glutamine amidotransferase type-1 domain; it reads RVVVLDLGVK…EFVKILEGRK (186 aa). The active-site Nucleophile is C263. Residues L264, Q267, N305, G307, and Y308 each contribute to the L-glutamine site. Active-site residues include H346 and E348.

The protein belongs to the CarA family. Composed of two chains; the small (or glutamine) chain promotes the hydrolysis of glutamine to ammonia, which is used by the large (or ammonia) chain to synthesize carbamoyl phosphate. Tetramer of heterodimers (alpha,beta)4.

It catalyses the reaction hydrogencarbonate + L-glutamine + 2 ATP + H2O = carbamoyl phosphate + L-glutamate + 2 ADP + phosphate + 2 H(+). The catalysed reaction is L-glutamine + H2O = L-glutamate + NH4(+). It functions in the pathway amino-acid biosynthesis; L-arginine biosynthesis; carbamoyl phosphate from bicarbonate: step 1/1. Its pathway is pyrimidine metabolism; UMP biosynthesis via de novo pathway; (S)-dihydroorotate from bicarbonate: step 1/3. In terms of biological role, small subunit of the glutamine-dependent carbamoyl phosphate synthetase (CPSase). CPSase catalyzes the formation of carbamoyl phosphate from the ammonia moiety of glutamine, carbonate, and phosphate donated by ATP, constituting the first step of 2 biosynthetic pathways, one leading to arginine and/or urea and the other to pyrimidine nucleotides. The small subunit (glutamine amidotransferase) binds and cleaves glutamine to supply the large subunit with the substrate ammonia. The protein is Carbamoyl phosphate synthase small chain of Pyrococcus furiosus (strain ATCC 43587 / DSM 3638 / JCM 8422 / Vc1).